A 238-amino-acid polypeptide reads, in one-letter code: Protein CPn_0658/CP_0089/CPj0658/CpB0684 (238 aa).

It belongs to the chlamydial CPn_0658/CT_538/TC_0825 family.

This chain is Protein CPn_0658/CP_0089/CPj0658/CpB0684, found in Chlamydia pneumoniae (Chlamydophila pneumoniae).